The primary structure comprises 638 residues: 1-deoxy-D-xylulose-5-phosphate synthase (638 aa).

Thiamine diphosphate contacts are provided by residues H79 and A120–S122. D151 provides a ligand contact to Mg(2+). Residues G152–A153, N180, Y289, and E371 contribute to the thiamine diphosphate site. N180 is a binding site for Mg(2+).

This sequence belongs to the transketolase family. DXPS subfamily. As to quaternary structure, homodimer. It depends on Mg(2+) as a cofactor. The cofactor is thiamine diphosphate.

The enzyme catalyses D-glyceraldehyde 3-phosphate + pyruvate + H(+) = 1-deoxy-D-xylulose 5-phosphate + CO2. It participates in metabolic intermediate biosynthesis; 1-deoxy-D-xylulose 5-phosphate biosynthesis; 1-deoxy-D-xylulose 5-phosphate from D-glyceraldehyde 3-phosphate and pyruvate: step 1/1. In terms of biological role, catalyzes the acyloin condensation reaction between C atoms 2 and 3 of pyruvate and glyceraldehyde 3-phosphate to yield 1-deoxy-D-xylulose-5-phosphate (DXP). This chain is 1-deoxy-D-xylulose-5-phosphate synthase, found in Rhizobium etli (strain CIAT 652).